Reading from the N-terminus, the 432-residue chain is Amino-acid acetyltransferase (432 aa).

The N-acetyltransferase domain occupies 286 to 425; that stretch reads ESLREATIED…ASLYNYQRNS (140 aa).

Belongs to the acetyltransferase family. ArgA subfamily.

It localises to the cytoplasm. It catalyses the reaction L-glutamate + acetyl-CoA = N-acetyl-L-glutamate + CoA + H(+). It participates in amino-acid biosynthesis; L-arginine biosynthesis; N(2)-acetyl-L-ornithine from L-glutamate: step 1/4. In Ectopseudomonas mendocina (strain ymp) (Pseudomonas mendocina), this protein is Amino-acid acetyltransferase.